Here is a 173-residue protein sequence, read N- to C-terminus: Adenine phosphoribosyltransferase (173 aa).

This sequence belongs to the purine/pyrimidine phosphoribosyltransferase family. As to quaternary structure, homodimer.

It is found in the cytoplasm. It carries out the reaction AMP + diphosphate = 5-phospho-alpha-D-ribose 1-diphosphate + adenine. Its pathway is purine metabolism; AMP biosynthesis via salvage pathway; AMP from adenine: step 1/1. Functionally, catalyzes a salvage reaction resulting in the formation of AMP, that is energically less costly than de novo synthesis. In Listeria monocytogenes serovar 1/2a (strain ATCC BAA-679 / EGD-e), this protein is Adenine phosphoribosyltransferase.